Reading from the N-terminus, the 378-residue chain is Erythronate-4-phosphate dehydrogenase (378 aa).

Positions 45 and 66 each coordinate substrate. NAD(+) contacts are provided by Asp146 and Thr175. Residue Arg208 is part of the active site. NAD(+) is bound at residue Asp232. Residue Glu237 is part of the active site. The active-site Proton donor is His254. Gly257 serves as a coordination point for NAD(+). Tyr258 lines the substrate pocket.

This sequence belongs to the D-isomer specific 2-hydroxyacid dehydrogenase family. PdxB subfamily. As to quaternary structure, homodimer.

Its subcellular location is the cytoplasm. It carries out the reaction 4-phospho-D-erythronate + NAD(+) = (R)-3-hydroxy-2-oxo-4-phosphooxybutanoate + NADH + H(+). The protein operates within cofactor biosynthesis; pyridoxine 5'-phosphate biosynthesis; pyridoxine 5'-phosphate from D-erythrose 4-phosphate: step 2/5. Its function is as follows. Catalyzes the oxidation of erythronate-4-phosphate to 3-hydroxy-2-oxo-4-phosphonooxybutanoate. This Enterobacter sp. (strain 638) protein is Erythronate-4-phosphate dehydrogenase.